The primary structure comprises 90 residues: U7-theraphotoxin-Hhn1a 5 (90 aa).

Positions 1–19 (MKTAIFTVVLALAVFAVLS) are cleaved as a signal peptide. Residues 20 to 50 (FGWEANEKALSEESTELIHEKEAASETEARE) constitute a propeptide that is removed on maturation. Intrachain disulfides connect Cys51-Cys65, Cys58-Cys70, and Cys64-Cys81.

The protein belongs to the neurotoxin 10 (Hwtx-1) family. 13 (Hntx-13) subfamily. In terms of tissue distribution, expressed by the venom gland.

It is found in the secreted. Ion channel inhibitor. The chain is U7-theraphotoxin-Hhn1a 5 from Cyriopagopus hainanus (Chinese bird spider).